A 357-amino-acid chain; its full sequence is mRNA endoribonuclease toxin LS (357 aa).

In terms of assembly, forms homodimer in solution. Forms a complex with cognate antitoxin RnlB and with enterobacteria phage T4 antitoxin Dmd.

The protein resides in the cytoplasm. In terms of biological role, toxic component of a type II toxin-antitoxin (TA) system. A stable (half-life 27.6 minutes) endoribonuclease that in the absence of cognate antitoxin RnlB causes generalized RNA degradation. Degrades late enterobacteria phage T4 mRNAs, protecting the host against T4 reproduction. Activity is inhibited by cognate antitoxin RnlB and by enterobacteria phage T4 protein Dmd. Targets cyaA mRNA. The chain is mRNA endoribonuclease toxin LS (rnlA) from Escherichia coli (strain K12).